Reading from the N-terminus, the 436-residue chain is Gamma-glutamyl phosphate reductase (436 aa).

This sequence belongs to the gamma-glutamyl phosphate reductase family.

Its subcellular location is the cytoplasm. It carries out the reaction L-glutamate 5-semialdehyde + phosphate + NADP(+) = L-glutamyl 5-phosphate + NADPH + H(+). It participates in amino-acid biosynthesis; L-proline biosynthesis; L-glutamate 5-semialdehyde from L-glutamate: step 2/2. Functionally, catalyzes the NADPH-dependent reduction of L-glutamate 5-phosphate into L-glutamate 5-semialdehyde and phosphate. The product spontaneously undergoes cyclization to form 1-pyrroline-5-carboxylate. The sequence is that of Gamma-glutamyl phosphate reductase from Prochlorococcus marinus (strain MIT 9215).